Consider the following 302-residue polypeptide: Oxygen-dependent coproporphyrinogen-III oxidase (302 aa).

Ser-94 contributes to the substrate binding site. Residues His-98 and His-108 each contribute to the a divalent metal cation site. The active-site Proton donor is the His-108. Asn-110–Arg-112 provides a ligand contact to substrate. His-147 and His-177 together coordinate a divalent metal cation. Residues Tyr-242–Glu-277 are important for dimerization. Gly-260–Arg-262 lines the substrate pocket.

The protein belongs to the aerobic coproporphyrinogen-III oxidase family. As to quaternary structure, homodimer. It depends on a divalent metal cation as a cofactor.

The protein localises to the cytoplasm. The catalysed reaction is coproporphyrinogen III + O2 + 2 H(+) = protoporphyrinogen IX + 2 CO2 + 2 H2O. It participates in porphyrin-containing compound metabolism; protoporphyrin-IX biosynthesis; protoporphyrinogen-IX from coproporphyrinogen-III (O2 route): step 1/1. Involved in the heme biosynthesis. Catalyzes the aerobic oxidative decarboxylation of propionate groups of rings A and B of coproporphyrinogen-III to yield the vinyl groups in protoporphyrinogen-IX. The chain is Oxygen-dependent coproporphyrinogen-III oxidase from Aeromonas hydrophila subsp. hydrophila (strain ATCC 7966 / DSM 30187 / BCRC 13018 / CCUG 14551 / JCM 1027 / KCTC 2358 / NCIMB 9240 / NCTC 8049).